The chain runs to 353 residues: Phosphoribosylformylglycinamidine cyclo-ligase (353 aa).

Belongs to the AIR synthase family.

It localises to the cytoplasm. The enzyme catalyses 2-formamido-N(1)-(5-O-phospho-beta-D-ribosyl)acetamidine + ATP = 5-amino-1-(5-phospho-beta-D-ribosyl)imidazole + ADP + phosphate + H(+). It participates in purine metabolism; IMP biosynthesis via de novo pathway; 5-amino-1-(5-phospho-D-ribosyl)imidazole from N(2)-formyl-N(1)-(5-phospho-D-ribosyl)glycinamide: step 2/2. The polypeptide is Phosphoribosylformylglycinamidine cyclo-ligase (Methylocella silvestris (strain DSM 15510 / CIP 108128 / LMG 27833 / NCIMB 13906 / BL2)).